A 432-amino-acid chain; its full sequence is Ribulose bisphosphate carboxylase-like protein 2 (432 aa).

3 residues coordinate Mg(2+): lysine 198, aspartate 200, and glutamate 201. At lysine 198 the chain carries N6-carboxylysine.

Belongs to the RuBisCO large chain family. Type IV subfamily. Homodimer. Mg(2+) serves as cofactor.

May be involved in sulfur metabolism and oxidative stress response. Does not show RuBisCO activity. In Rhodopseudomonas palustris (strain ATCC BAA-98 / CGA009), this protein is Ribulose bisphosphate carboxylase-like protein 2 (rlp2).